An 815-amino-acid chain; its full sequence is Tubulin polyglutamylase TTLL13 (815 aa).

The TTL domain maps to 85 to 430 (RRSLAINLTN…RGCDKRKVME (346 aa)). Residues lysine 202, 208–209 (QG), 230–233 (QQYI), and 243–245 (KFD) contribute to the ATP site. Glutamine 208 lines the a protein pocket. Arginine 269 serves as a coordination point for L-glutamate. 291–292 (TN) is a binding site for ATP. 2 residues coordinate L-glutamate: tyrosine 293 and lysine 311. 3 residues coordinate Mg(2+): aspartate 376, glutamate 389, and asparagine 391. The segment at 401-482 (CLDQEVKDAL…LGKYRRIYPG (82 aa)) is c-MTBD region. Residue lysine 407 participates in L-glutamate binding. Residues 504 to 528 (ASKAREECARQQLEEIRLKQEQQET) adopt a coiled-coil conformation. A disordered region spans residues 520–556 (RLKQEQQETSGTKRQKARDQNQGESAGEKSRPRAGLQ). The segment covering 536–550 (ARDQNQGESAGEKSR) has biased composition (basic and acidic residues).

Belongs to the tubulin--tyrosine ligase family. The cofactor is Mg(2+).

It carries out the reaction (L-glutamyl)(n)-gamma-L-glutamyl-L-glutamyl-[protein] + L-glutamate + ATP = (L-glutamyl)(n+1)-gamma-L-glutamyl-L-glutamyl-[protein] + ADP + phosphate + H(+). Functionally, polyglutamylase which modifies tubulin, generating polyglutamate side chains of variable lengths on the gamma-carboxyl group of specific glutamate residues within the C-terminal tail of tubulin. Mediates ATP-dependent polyglutamate side-chain elongation of the polyglutamylation reaction but not the initiation step. Preferentially modifies the alpha-tubulin tail over a beta-tail. This is Tubulin polyglutamylase TTLL13 from Homo sapiens (Human).